A 390-amino-acid chain; its full sequence is 2-oxoisovalerate dehydrogenase subunit beta, mitochondrial (390 aa).

A mitochondrion-targeting transit peptide spans 1-48 (MAAVAARAGGLLWLRAAGAERRRCGLRCAALVQGFLQPGGEDTAQKRR). Tyr-150 is a binding site for thiamine diphosphate. Residues Gly-176, Leu-178, Thr-179, Cys-226, and Asp-229 each coordinate K(+). At Lys-230 the chain carries N6-acetyllysine. Residue Asn-231 coordinates K(+). Lys-239 carries the post-translational modification N6-acetyllysine.

Heterotetramer of 2 alpha/BCKDHA and 2 beta chains/BCKDHB that forms the branched-chain alpha-keto acid decarboxylase (E1) component of the BCKD complex. The branched-chain alpha-ketoacid dehydrogenase is a large complex composed of three major building blocks E1, E2 and E3. It is organized around E2, a 24-meric cubic core composed of DBT, to which are associated 6 to 12 copies of E1, and approximately 6 copies of the dehydrogenase E3, a DLD dimer. Thiamine diphosphate is required as a cofactor.

The protein localises to the mitochondrion matrix. The enzyme catalyses N(6)-[(R)-lipoyl]-L-lysyl-[protein] + 3-methyl-2-oxobutanoate + H(+) = N(6)-[(R)-S(8)-2-methylpropanoyldihydrolipoyl]-L-lysyl-[protein] + CO2. Its function is as follows. Together with BCKDHA forms the heterotetrameric E1 subunit of the mitochondrial branched-chain alpha-ketoacid dehydrogenase (BCKD) complex. The BCKD complex catalyzes the multi-step oxidative decarboxylation of alpha-ketoacids derived from the branched-chain amino-acids valine, leucine and isoleucine producing CO2 and acyl-CoA which is subsequently utilized to produce energy. The E1 subunit catalyzes the first step with the decarboxylation of the alpha-ketoacid forming an enzyme-product intermediate. A reductive acylation mediated by the lipoylamide cofactor of E2 extracts the acyl group from the E1 active site for the next step of the reaction. In Mus musculus (Mouse), this protein is 2-oxoisovalerate dehydrogenase subunit beta, mitochondrial.